Reading from the N-terminus, the 122-residue chain is uncharacterized protein (122 aa).

Threonine 55 bears the Phosphothreonine mark. 5 positions are modified to phosphoserine: serine 72, serine 86, serine 96, serine 112, and serine 118.

It localises to the cytoplasm. This is an uncharacterized protein from Homo sapiens (Human).